Reading from the N-terminus, the 430-residue chain is Adenylosuccinate synthetase (430 aa).

GTP-binding positions include 12-18 (GDEGKGK) and 40-42 (GHT). Asp13 functions as the Proton acceptor in the catalytic mechanism. Mg(2+) is bound by residues Asp13 and Gly40. IMP is bound by residues 13–16 (DEGK), 38–41 (NAGH), Thr128, Arg142, Gln223, Thr238, and Arg302. His41 (proton donor) is an active-site residue. Residues 330–332 (SID) and 412–414 (SVG) contribute to the GTP site.

This sequence belongs to the adenylosuccinate synthetase family. As to quaternary structure, homodimer. The cofactor is Mg(2+).

It is found in the cytoplasm. It carries out the reaction IMP + L-aspartate + GTP = N(6)-(1,2-dicarboxyethyl)-AMP + GDP + phosphate + 2 H(+). The protein operates within purine metabolism; AMP biosynthesis via de novo pathway; AMP from IMP: step 1/2. Functionally, plays an important role in the de novo pathway of purine nucleotide biosynthesis. Catalyzes the first committed step in the biosynthesis of AMP from IMP. This is Adenylosuccinate synthetase from Bacillus subtilis (strain 168).